Here is a 276-residue protein sequence, read N- to C-terminus: Omega-amidase NIT2 (276 aa).

A CN hydrolase domain is found at 4-248 (FRLSLVQFLV…ETVISADIDL (245 aa)). Residue Glu-43 is the Proton acceptor of the active site. Lys-112 serves as the catalytic Proton donor. The active-site Nucleophile is Cys-153.

The protein belongs to the carbon-nitrogen hydrolase superfamily. NIT1/NIT2 family. In terms of assembly, homodimer.

The protein localises to the cytoplasm. The catalysed reaction is 2-oxoglutaramate + H2O = 2-oxoglutarate + NH4(+). It carries out the reaction 2-oxosuccinamate + H2O = oxaloacetate + NH4(+). In terms of biological role, has omega-amidase activity. The role of omega-amidase is to remove potentially toxic intermediates by converting 2-oxoglutaramate and 2-oxosuccinamate to biologically useful 2-oxoglutarate and oxaloacetate, respectively. The chain is Omega-amidase NIT2 (nit2) from Xenopus tropicalis (Western clawed frog).